The following is a 2710-amino-acid chain: Serine/threonine-protein kinase ATR (2710 aa).

The FAT domain occupies 1647–2257; sequence TLAKASFRCQ…LWMMAAVSKS (611 aa). The 313-residue stretch at 2368 to 2680 folds into the PI3K/PI4K catalytic domain; that stretch reads IADDAEILNS…GVNAAPSLPL (313 aa). A G-loop region spans residues 2374-2380; it reads ILNSLQK. A catalytic loop region spans residues 2545–2553; that stretch reads GLGDRHGEN. Residues 2565–2589 are activation loop; that stretch reads HVDFSCLFDKGLLLEKPEVVPFRFT. An FATC domain is found at 2678 to 2710; it reads LPLSVEGQARRLIAEAVSHSNLGKMYVWWMAWF.

Belongs to the PI3/PI4-kinase family. ATM subfamily.

It is found in the nucleus. The enzyme catalyses L-seryl-[protein] + ATP = O-phospho-L-seryl-[protein] + ADP + H(+). It catalyses the reaction L-threonyl-[protein] + ATP = O-phospho-L-threonyl-[protein] + ADP + H(+). In terms of biological role, probable serine/threonine kinase. Seems to play a central role in cell-cycle regulation by transmitting DNA damage signals to downstream effectors of cell-cycle progression. May recognize the substrate consensus sequence [ST]-Q and phosphorylate histone variant H2AX to form H2AXS139ph at sites of DNA damage, thereby regulating DNA damage response mechanism. The chain is Serine/threonine-protein kinase ATR from Oryza sativa subsp. indica (Rice).